Consider the following 87-residue polypeptide: Costars family protein (87 aa).

Belongs to the costars family.

The chain is Costars family protein from Oryza sativa subsp. indica (Rice).